Reading from the N-terminus, the 60-residue chain is Protein BNLF2a (60 aa).

The segment covering 14–26 (SSACGLPGSSTET) has biased composition (polar residues). The segment at 14 to 34 (SSACGLPGSSTETRPSHPCPE) is disordered. Residues 41–59 (LRLLLVVLCVLFGLLCLLL) form a helical membrane-spanning segment.

It belongs to the lymphocryptovirus BNLF2a family. As to quaternary structure, interacts with host TAP1 and TAP2.

Its subcellular location is the host endoplasmic reticulum membrane. Its function is as follows. Participates in viral evasion from HLA class I-restricted T-cell immunity. Associates with host TAP1 and TAP2 and prevents TAP-mediated peptide transport and subsequent loading. The protein is Protein BNLF2a of Homo sapiens (Human).